Here is a 334-residue protein sequence, read N- to C-terminus: tRNA N6-adenosine threonylcarbamoyltransferase (334 aa).

Fe cation-binding residues include His-112 and His-116. Substrate contacts are provided by residues 135 to 139 (VVSGG), Asp-168, Gly-181, Asp-185, and Asn-274. Fe cation is bound at residue Asp-303.

The protein belongs to the KAE1 / TsaD family. The cofactor is Fe(2+).

It is found in the cytoplasm. It catalyses the reaction L-threonylcarbamoyladenylate + adenosine(37) in tRNA = N(6)-L-threonylcarbamoyladenosine(37) in tRNA + AMP + H(+). Functionally, required for the formation of a threonylcarbamoyl group on adenosine at position 37 (t(6)A37) in tRNAs that read codons beginning with adenine. Is involved in the transfer of the threonylcarbamoyl moiety of threonylcarbamoyl-AMP (TC-AMP) to the N6 group of A37, together with TsaE and TsaB. TsaD likely plays a direct catalytic role in this reaction. The polypeptide is tRNA N6-adenosine threonylcarbamoyltransferase (Anaeromyxobacter dehalogenans (strain 2CP-1 / ATCC BAA-258)).